Reading from the N-terminus, the 406-residue chain is 2,3-bisphosphoglycerate-independent phosphoglycerate mutase (406 aa).

Residues 164–184 form a disordered region; that stretch reads VSSNDPKKTGVQPKTIHPDDD.

This sequence belongs to the BPG-independent phosphoglycerate mutase family. A-PGAM subfamily.

It carries out the reaction (2R)-2-phosphoglycerate = (2R)-3-phosphoglycerate. The protein operates within carbohydrate degradation; glycolysis; pyruvate from D-glyceraldehyde 3-phosphate: step 3/5. Catalyzes the interconversion of 2-phosphoglycerate and 3-phosphoglycerate. This is 2,3-bisphosphoglycerate-independent phosphoglycerate mutase from Methanocorpusculum labreanum (strain ATCC 43576 / DSM 4855 / Z).